A 139-amino-acid polypeptide reads, in one-letter code: Endoribonuclease YbeY (139 aa).

The Zn(2+) site is built by His-105, His-109, and Asp-115.

The protein belongs to the endoribonuclease YbeY family. It depends on Zn(2+) as a cofactor.

It is found in the cytoplasm. In terms of biological role, single strand-specific metallo-endoribonuclease involved in late-stage 70S ribosome quality control and in maturation of the 3' terminus of the 16S rRNA. This Flavobacterium johnsoniae (strain ATCC 17061 / DSM 2064 / JCM 8514 / BCRC 14874 / CCUG 350202 / NBRC 14942 / NCIMB 11054 / UW101) (Cytophaga johnsonae) protein is Endoribonuclease YbeY.